The following is a 737-amino-acid chain: O-GlcNAcase BT_4395 (737 aa).

The N-terminal stretch at methionine 1 to alanine 21 is a signal peptide. The interval valine 148–proline 433 is catalytic domain. Residues arginine 149–alanine 416 enclose the GH84 domain. A protein-binding residues include glycine 156, lysine 187, and aspartate 263. Aspartate 264 (proton donor) is an active-site residue. A protein contacts are provided by residues tyrosine 303, tryptophan 358–asparagine 360, aspartate 365, and asparagine 393.

It belongs to the glycosyl hydrolase 84 family. In terms of assembly, homodimer.

The catalysed reaction is 3-O-(N-acetyl-beta-D-glucosaminyl)-L-seryl-[protein] + H2O = N-acetyl-D-glucosamine + L-seryl-[protein]. The enzyme catalyses 3-O-(N-acetyl-beta-D-glucosaminyl)-L-threonyl-[protein] + H2O = L-threonyl-[protein] + N-acetyl-D-glucosamine. Its activity is regulated as follows. Inhibited by 1,2-dideoxy-2'-methyl-alpha-D-glucopyranoso-[2,1-d]-delta 2'-thiazoline (NAG-thiazoline) and O-(2-acetamido-2-deoxy-D-glucopyranosylidene)amino-N-phenyl-carbamate (PUGNAc). Not inhibited by Streptozotocin. Its function is as follows. Can hydrolyze the glycosidic link of O-GlcNAcylated proteins. Can use p-nitrophenyl-beta-GlcNAc and 4-methylumbelliferone-GlcNAc as substrates (in vitro). This chain is O-GlcNAcase BT_4395, found in Bacteroides thetaiotaomicron (strain ATCC 29148 / DSM 2079 / JCM 5827 / CCUG 10774 / NCTC 10582 / VPI-5482 / E50).